A 179-amino-acid chain; its full sequence is Sec-independent protein translocase protein TatB (179 aa).

The helical transmembrane segment at 1–21 (MLDLGLSKMALIGVVALVVLG) threads the bilayer. The segment covering 101–115 (GAAGDAGSVGSPGSD) has biased composition (low complexity). The segment at 101–134 (GAAGDAGSVGSPGSDTPAAPSWRGSSAALAPKRR) is disordered.

The protein belongs to the TatB family. In terms of assembly, the Tat system comprises two distinct complexes: a TatABC complex, containing multiple copies of TatA, TatB and TatC subunits, and a separate TatA complex, containing only TatA subunits. Substrates initially bind to the TatABC complex, which probably triggers association of the separate TatA complex to form the active translocon.

It is found in the cell inner membrane. Functionally, part of the twin-arginine translocation (Tat) system that transports large folded proteins containing a characteristic twin-arginine motif in their signal peptide across membranes. Together with TatC, TatB is part of a receptor directly interacting with Tat signal peptides. TatB may form an oligomeric binding site that transiently accommodates folded Tat precursor proteins before their translocation. This Burkholderia orbicola (strain AU 1054) protein is Sec-independent protein translocase protein TatB.